Consider the following 162-residue polypeptide: ATP synthase subunit b 1 (162 aa).

The chain crosses the membrane as a helical span at residues 1–21 (MLLTAEFWVAVAFVAFLVIVW).

It belongs to the ATPase B chain family. In terms of assembly, F-type ATPases have 2 components, F(1) - the catalytic core - and F(0) - the membrane proton channel. F(1) has five subunits: alpha(3), beta(3), gamma(1), delta(1), epsilon(1). F(0) has three main subunits: a(1), b(2) and c(10-14). The alpha and beta chains form an alternating ring which encloses part of the gamma chain. F(1) is attached to F(0) by a central stalk formed by the gamma and epsilon chains, while a peripheral stalk is formed by the delta and b chains.

It localises to the cell inner membrane. F(1)F(0) ATP synthase produces ATP from ADP in the presence of a proton or sodium gradient. F-type ATPases consist of two structural domains, F(1) containing the extramembraneous catalytic core and F(0) containing the membrane proton channel, linked together by a central stalk and a peripheral stalk. During catalysis, ATP synthesis in the catalytic domain of F(1) is coupled via a rotary mechanism of the central stalk subunits to proton translocation. Its function is as follows. Component of the F(0) channel, it forms part of the peripheral stalk, linking F(1) to F(0). The chain is ATP synthase subunit b 1 from Methylorubrum extorquens (strain PA1) (Methylobacterium extorquens).